Reading from the N-terminus, the 872-residue chain is Protein SEY1 (872 aa).

Residues 1 to 749 (MVANGHFAGV…KRSAIGGITQ (749 aa)) are Cytoplasmic-facing. The GB1/RHD3-type G domain maps to 49–307 (GFNYHLISVF…IPADGFAVYA (259 aa)). Position 59 to 66 (59 to 66 (GSQSTGKS)) interacts with GTP. The stretch at 482–504 (SNYQQELSLYQKDLENIGGQLRR) forms a coiled coil. A disordered region spans residues 676–704 (LDKWIGHTPSSATPADEEDLTPIGGVDED). Positions 690–704 (ADEEDLTPIGGVDED) are enriched in acidic residues. A helical transmembrane segment spans residues 750–770 (VPLYFYGLLLALGWNEIVAVL). Topologically, residues 771 to 773 (RNP) are lumenal. Residues 774 to 794 (AYFLLLFVCAVTAYVTYQLNL) traverse the membrane as a helical segment. Residues 795-872 (WGPIIKMTEA…IDDADDDDDF (78 aa)) lie on the Cytoplasmic side of the membrane. The disordered stretch occupies residues 849 to 872 (NRKSAGGFQNNRSHIDDADDDDDF).

Belongs to the TRAFAC class dynamin-like GTPase superfamily. GB1/RHD3 GTPase family. RHD3 subfamily.

Its subcellular location is the endoplasmic reticulum membrane. Cooperates with the reticulon proteins and tubule-shaping DP1 family proteins to generate and maintain the structure of the tubular endoplasmic reticulum network. Has GTPase activity, which is required for its function in ER organization. The chain is Protein SEY1 from Paracoccidioides brasiliensis (strain Pb18).